Here is a 402-residue protein sequence, read N- to C-terminus: uncharacterized protein (402 aa).

12 consecutive transmembrane segments (helical) span residues 11–31 (LALAFLLGMLAILGPLNIDMY), 48–68 (LVQLSLTACLVGLTIGQLIVG), 80–100 (LLICIFLFALSSLFCALSPNI), 108–125 (FLQGFTASAGLVLSRAIV), 140–160 (LLMVITAVAPMVAPMTGGAIL), 167–187 (WHTIFHVLMIIGFLLVLLIAL), 219–239 (FMGYALTVGFIHGGSFAYVSG), 254–274 (VFSILFGINGLAIISGSFIIG), 286–306 (LRIAVITAMIATAVLLTMTMI), 308–328 (GPLATLVISIFIYMITIGMVL), 347–367 (SALLGMLPLLLGSIVSPLVGI), and 373–393 (VPMGAIMFVTAVIGSLAFFGL).

It belongs to the major facilitator superfamily. Bcr/CmlA family.

The protein resides in the cell membrane. This is an uncharacterized protein from Bacillus subtilis (strain 168).